Consider the following 574-residue polypeptide: Proline--tRNA ligase (574 aa).

Belongs to the class-II aminoacyl-tRNA synthetase family. ProS type 1 subfamily. As to quaternary structure, homodimer.

Its subcellular location is the cytoplasm. It catalyses the reaction tRNA(Pro) + L-proline + ATP = L-prolyl-tRNA(Pro) + AMP + diphosphate. Functionally, catalyzes the attachment of proline to tRNA(Pro) in a two-step reaction: proline is first activated by ATP to form Pro-AMP and then transferred to the acceptor end of tRNA(Pro). As ProRS can inadvertently accommodate and process non-cognate amino acids such as alanine and cysteine, to avoid such errors it has two additional distinct editing activities against alanine. One activity is designated as 'pretransfer' editing and involves the tRNA(Pro)-independent hydrolysis of activated Ala-AMP. The other activity is designated 'posttransfer' editing and involves deacylation of mischarged Ala-tRNA(Pro). The misacylated Cys-tRNA(Pro) is not edited by ProRS. The chain is Proline--tRNA ligase from Marinomonas sp. (strain MWYL1).